The primary structure comprises 445 residues: Phosphoglucosamine mutase (445 aa).

Ser-102 functions as the Phosphoserine intermediate in the catalytic mechanism. Positions 102, 241, 243, and 245 each coordinate Mg(2+). Ser-102 carries the post-translational modification Phosphoserine.

This sequence belongs to the phosphohexose mutase family. Mg(2+) serves as cofactor. In terms of processing, activated by phosphorylation.

It catalyses the reaction alpha-D-glucosamine 1-phosphate = D-glucosamine 6-phosphate. Functionally, catalyzes the conversion of glucosamine-6-phosphate to glucosamine-1-phosphate. The chain is Phosphoglucosamine mutase from Escherichia fergusonii (strain ATCC 35469 / DSM 13698 / CCUG 18766 / IAM 14443 / JCM 21226 / LMG 7866 / NBRC 102419 / NCTC 12128 / CDC 0568-73).